The primary structure comprises 475 residues: Homeobox even-skipped homolog protein 2 (475 aa).

Disordered regions lie at residues 82 to 113 (PSSESTVSSEIASATESRKKPSHYSEAAAEAD) and 155 to 189 (TSASGSGLGSLHGGGGGGNSGAAALGGSGSGSGAD). Over residues 83 to 96 (SSESTVSSEIASAT) the composition is skewed to low complexity. A compositionally biased stretch (gly residues) spans 160 to 186 (SGLGSLHGGGGGGNSGAAALGGSGSGS). The segment at residues 191-250 (VRRYRTAFTREQIARLEKEFYRENYVSRPRRCELAAALNLPETTIKVWFQNRRMKDKRQR) is a DNA-binding region (homeobox).

It belongs to the even-skipped homeobox family.

It localises to the nucleus. This is Homeobox even-skipped homolog protein 2 (Evx2) from Mus musculus (Mouse).